We begin with the raw amino-acid sequence, 277 residues long: Phosphate import ATP-binding protein PstB 1 (277 aa).

Positions 27–272 (LRVRDLAVSY…PSHELTAAYI (246 aa)) constitute an ABC transporter domain. Residue 59–66 (GPSGCGKT) coordinates ATP.

Belongs to the ABC transporter superfamily. Phosphate importer (TC 3.A.1.7) family. The complex is composed of two ATP-binding proteins (PstB), two transmembrane proteins (PstC and PstA) and a solute-binding protein (PstS).

The protein localises to the cell inner membrane. It catalyses the reaction phosphate(out) + ATP + H2O = ADP + 2 phosphate(in) + H(+). Functionally, part of the ABC transporter complex PstSACB involved in phosphate import. Responsible for energy coupling to the transport system. The sequence is that of Phosphate import ATP-binding protein PstB 1 from Nitrosococcus oceani (strain ATCC 19707 / BCRC 17464 / JCM 30415 / NCIMB 11848 / C-107).